A 420-amino-acid chain; its full sequence is Serine--tRNA ligase (420 aa).

227 to 229 (TSE) is an L-serine binding site. Residues 258 to 260 (RRE) and V274 contribute to the ATP site. E281 provides a ligand contact to L-serine. 345-348 (ELTS) is a binding site for ATP. T380 serves as a coordination point for L-serine.

Belongs to the class-II aminoacyl-tRNA synthetase family. Type-1 seryl-tRNA synthetase subfamily. Homodimer. The tRNA molecule binds across the dimer.

The protein localises to the cytoplasm. It carries out the reaction tRNA(Ser) + L-serine + ATP = L-seryl-tRNA(Ser) + AMP + diphosphate + H(+). It catalyses the reaction tRNA(Sec) + L-serine + ATP = L-seryl-tRNA(Sec) + AMP + diphosphate + H(+). It functions in the pathway aminoacyl-tRNA biosynthesis; selenocysteinyl-tRNA(Sec) biosynthesis; L-seryl-tRNA(Sec) from L-serine and tRNA(Sec): step 1/1. In terms of biological role, catalyzes the attachment of serine to tRNA(Ser). Is also able to aminoacylate tRNA(Sec) with serine, to form the misacylated tRNA L-seryl-tRNA(Sec), which will be further converted into selenocysteinyl-tRNA(Sec). The sequence is that of Serine--tRNA ligase from Nocardia farcinica (strain IFM 10152).